Consider the following 338-residue polypeptide: Heat-inducible transcription repressor HrcA (338 aa).

The protein belongs to the HrcA family.

In terms of biological role, negative regulator of class I heat shock genes (grpE-dnaK-dnaJ and groELS operons). Prevents heat-shock induction of these operons. This is Heat-inducible transcription repressor HrcA from Bacillus cereus (strain AH187).